The chain runs to 284 residues: Ribosomal RNA small subunit methyltransferase A (284 aa).

S-adenosyl-L-methionine-binding residues include N12, L14, G38, E59, D81, and N106.

The protein belongs to the class I-like SAM-binding methyltransferase superfamily. rRNA adenine N(6)-methyltransferase family. RsmA subfamily.

The protein localises to the cytoplasm. The enzyme catalyses adenosine(1518)/adenosine(1519) in 16S rRNA + 4 S-adenosyl-L-methionine = N(6)-dimethyladenosine(1518)/N(6)-dimethyladenosine(1519) in 16S rRNA + 4 S-adenosyl-L-homocysteine + 4 H(+). In terms of biological role, specifically dimethylates two adjacent adenosines (A1518 and A1519) in the loop of a conserved hairpin near the 3'-end of 16S rRNA in the 30S particle. May play a critical role in biogenesis of 30S subunits. The chain is Ribosomal RNA small subunit methyltransferase A from Phytoplasma australiense.